Consider the following 293-residue polypeptide: MAMEMRLPVARKPLSERLGRDTKKHLVVPGDTITTDTGFMRGHGTYMGEEKLIASVAGSVERVNKLICVKALKTRYIGEVGDIVVGRITEVQQKRWKVETNSRLDSVLLLSSMNLPGGELRRRSAEDELAMRGFLQEGDLISAEVQAVFSDGAVSLHTRSLKYGKLGQGVLVQVSPSLVKRQKTHFHDLPCGASVILGNNGFIWIYPTPEHKEEEAGGFIANLEPVSLADREVISRLRNCIISLVTQRMMLYDTSILYCYEASLPHQIKDILKPEIMEEIVMETRQRLLEQEG.

The S1 motif domain occupies glutamate 79–arginine 159. Serine 124 carries the post-translational modification Phosphoserine.

Belongs to the RRP4 family. Component of the RNA exosome core complex (Exo-9), composed of EXOSC1, EXOSC2, EXOSC3, EXOSC4, EXOSC5, EXOSC6, EXOSC7, EXOSC8 and EXOSC9; within the complex interacts with EXOSC4 and EXOSC7. The catalytically inactive RNA exosome core complex (Exo-9) associates with the catalytic subunit EXOSC10/RRP6. Exo-9 may associate with DIS3 to form the nucleolar exosome complex, or DIS3L to form the cytoplasmic exosome complex. Exo-9 is formed by a hexameric base ring consisting of the heterodimers EXOSC4-EXOSC9, EXOSC5-EXOSC8 and EXOSC6-EXOSC7, and a cap ring consisting of EXOSC1, EXOSC2 and EXOSC3. The RNA exosome complex associates with cofactors C1D/RRP47, MPHOSPH6/MPP6 and MTREX/MTR4. Interacts with GTPBP1. Interacts with ZFP36L1 (via N-terminus).

It is found in the cytoplasm. The protein resides in the nucleus. Its subcellular location is the nucleolus. Its function is as follows. Non-catalytic component of the RNA exosome complex which has 3'-&gt;5' exoribonuclease activity and participates in a multitude of cellular RNA processing and degradation events. In the nucleus, the RNA exosome complex is involved in proper maturation of stable RNA species such as rRNA, snRNA and snoRNA, in the elimination of RNA processing by-products and non-coding 'pervasive' transcripts, such as antisense RNA species and promoter-upstream transcripts (PROMPTs), and of mRNAs with processing defects, thereby limiting or excluding their export to the cytoplasm. The RNA exosome may be involved in Ig class switch recombination (CSR) and/or Ig variable region somatic hypermutation (SHM) by targeting AICDA deamination activity to transcribed dsDNA substrates. In the cytoplasm, the RNA exosome complex is involved in general mRNA turnover and specifically degrades inherently unstable mRNAs containing AU-rich elements (AREs) within their 3' untranslated regions, and in RNA surveillance pathways, preventing translation of aberrant mRNAs. It seems to be involved in degradation of histone mRNA. The catalytic inactive RNA exosome core complex of 9 subunits (Exo-9) is proposed to play a pivotal role in the binding and presentation of RNA for ribonucleolysis, and to serve as a scaffold for the association with catalytic subunits and accessory proteins or complexes. EXOSC2 as peripheral part of the Exo-9 complex stabilizes the hexameric ring of RNase PH-domain subunits through contacts with EXOSC4 and EXOSC7. This is Exosome complex component RRP4 from Homo sapiens (Human).